Here is a 131-residue protein sequence, read N- to C-terminus: Small ribosomal subunit protein uS11 (131 aa).

It belongs to the universal ribosomal protein uS11 family. In terms of assembly, part of the 30S ribosomal subunit.

Its function is as follows. Located on the platform of the 30S subunit. The sequence is that of Small ribosomal subunit protein uS11 from Methanospirillum hungatei JF-1 (strain ATCC 27890 / DSM 864 / NBRC 100397 / JF-1).